The following is a 245-amino-acid chain: 1-(5-phosphoribosyl)-5-[(5-phosphoribosylamino)methylideneamino] imidazole-4-carboxamide isomerase (245 aa).

The active-site Proton acceptor is Asp7. Asp129 serves as the catalytic Proton donor.

Belongs to the HisA/HisF family.

The protein resides in the cytoplasm. It catalyses the reaction 1-(5-phospho-beta-D-ribosyl)-5-[(5-phospho-beta-D-ribosylamino)methylideneamino]imidazole-4-carboxamide = 5-[(5-phospho-1-deoxy-D-ribulos-1-ylimino)methylamino]-1-(5-phospho-beta-D-ribosyl)imidazole-4-carboxamide. Its pathway is amino-acid biosynthesis; L-histidine biosynthesis; L-histidine from 5-phospho-alpha-D-ribose 1-diphosphate: step 4/9. In Klebsiella pneumoniae subsp. pneumoniae (strain ATCC 700721 / MGH 78578), this protein is 1-(5-phosphoribosyl)-5-[(5-phosphoribosylamino)methylideneamino] imidazole-4-carboxamide isomerase.